The following is a 523-amino-acid chain: Calcium-dependent protein kinase 34 (523 aa).

Residues 1-60 (MGNCCSHGRDSDDNKEEPRPENGGGGVGAAEASVRASKHPPASPPPATKQGPIGPVLGRP) are disordered. Gly-2 carries the N-myristoyl glycine lipid modification. Residues 7–20 (HGRDSDDNKEEPRP) are compositionally biased toward basic and acidic residues. The Protein kinase domain maps to 68 to 326 (YTLGKELGRG…AAQVLNHPWI (259 aa)). Residues 74–82 (LGRGQFGVT) and Lys-97 contribute to the ATP site. Asp-192 (proton acceptor) is an active-site residue. Phosphoserine is present on Ser-232. Residues 332 to 362 (APDVPLDNAVMSRLKQFKAMNNFKKVALRVI) form an autoinhibitory domain region. EF-hand domains lie at 369-404 (EEIM…QGTR), 405-440 (LSEY…INRL), 441-476 (DREE…FGMN), and 480-511 (DIKE…GNPD). Residues Asp-382, Asp-384, Ser-386, Thr-388, Glu-393, Asp-418, Asp-420, Asn-422, Thr-424, Glu-429, Asp-454, Asp-456, Ser-458, Tyr-460, Glu-465, Asp-489, Asp-491, Asp-493, Arg-495, and Glu-500 each coordinate Ca(2+).

The protein belongs to the protein kinase superfamily. Ser/Thr protein kinase family. CDPK subfamily.

It is found in the membrane. It carries out the reaction L-seryl-[protein] + ATP = O-phospho-L-seryl-[protein] + ADP + H(+). The enzyme catalyses L-threonyl-[protein] + ATP = O-phospho-L-threonyl-[protein] + ADP + H(+). Activated by calcium. Autophosphorylation may play an important role in the regulation of the kinase activity. In terms of biological role, may play a role in signal transduction pathways that involve calcium as a second messenger. This chain is Calcium-dependent protein kinase 34 (CPK34), found in Arabidopsis thaliana (Mouse-ear cress).